The chain runs to 484 residues: MSFQQSETVPVPAQSSLSFTQGFLLGQLSVVLLIGAFIKFFIFGEAPPPPSRGLSHRASTHRRSNSIYTINHNEANNRSLREKPSNSNVLRPVPSSSTNTRSILRKTYYSAIPTNPSKHGRHKIHHSSHQPESLDWFNVLIAQTIAQYRQTAYLLKDSPTSSILSSLNAALNNPEKKPSFIDKINVTDISLGEEFPIFSNCRIIAVDDPNSDGGRLQALMDVDLSDDNLSIAIETSLLLNYPKPCSAILPVALSVSVVRFSGTLCISLVPASTPPLHTPSPSPSPPTADGNSRGKTTGDANARAADEEADGLPPKTGSPKSNVAFSFLPDYRLDLSVRSLIGSRSRLQDVPKVAQLVEARVHAWFEERVVEPRVQVVGLPDLWPRMGRTGVRTGDDSETGSNAASRSAMSADLGDHHLGDREPEGLRFRGGLASRPQFDSVSRTSSYNVETGDLRSPSLIREESSGALSEQFQMPGSLSGAAAR.

Topologically, residues 1 to 22 (MSFQQSETVPVPAQSSLSFTQG) are lumenal. The helical transmembrane segment at 23-43 (FLLGQLSVVLLIGAFIKFFIF) threads the bilayer. The Cytoplasmic portion of the chain corresponds to 44–484 (GEAPPPPSRG…PGSLSGAAAR (441 aa)). Disordered stretches follow at residues 50 to 98 (PSRG…SSST), 272 to 319 (STPP…TGSP), and 388 to 484 (RTGV…AAAR). The span at 54–64 (LSHRASTHRRS) shows a compositional bias: basic residues. Polar residues-rich tracts occupy residues 65 to 78 (NSIY…ANNR) and 85 to 98 (SNSN…SSST). One can recognise an SMP-LTD domain in the interval 130–380 (QPESLDWFNV…EPRVQVVGLP (251 aa)). A compositionally biased stretch (pro residues) spans 272–286 (STPPLHTPSPSPSPP). Residues 399 to 408 (TGSNAASRSA) show a composition bias toward polar residues. Residues 413–427 (LGDHHLGDREPEGLR) are compositionally biased toward basic and acidic residues. Composition is skewed to polar residues over residues 437–449 (QFDS…SYNV) and 466–476 (GALSEQFQMPG).

The protein belongs to the MMM1 family. In terms of assembly, homodimer. Component of the ER-mitochondria encounter structure (ERMES) or MDM complex, composed of mmm1, mdm10, mdm12 and mdm34. A mmm1 homodimer associates with one molecule of mdm12 on each side in a pairwise head-to-tail manner, and the SMP-LTD domains of mmm1 and mdm12 generate a continuous hydrophobic tunnel for phospholipid trafficking.

Its subcellular location is the endoplasmic reticulum membrane. In terms of biological role, component of the ERMES/MDM complex, which serves as a molecular tether to connect the endoplasmic reticulum (ER) and mitochondria. Components of this complex are involved in the control of mitochondrial shape and protein biogenesis, and function in nonvesicular lipid trafficking between the ER and mitochondria. The mdm12-mmm1 subcomplex functions in the major beta-barrel assembly pathway that is responsible for biogenesis of all outer membrane beta-barrel proteins, and acts in a late step after the SAM complex. The mdm10-mdm12-mmm1 subcomplex further acts in the TOM40-specific pathway after the action of the mdm12-mmm1 complex. Essential for establishing and maintaining the structure of mitochondria and maintenance of mtDNA nucleoids. The sequence is that of Maintenance of mitochondrial morphology protein 1 from Aspergillus niger (strain ATCC MYA-4892 / CBS 513.88 / FGSC A1513).